Consider the following 234-residue polypeptide: Triosephosphate isomerase (234 aa).

Residue 8–10 (NFK) participates in substrate binding. Catalysis depends on His-90, which acts as the Electrophile. Glu-159 (proton acceptor) is an active-site residue. Substrate-binding positions include Gly-165, Ser-197, and 218 to 219 (GS).

In terms of assembly, homodimer.

It is found in the cytoplasm. The catalysed reaction is D-glyceraldehyde 3-phosphate = dihydroxyacetone phosphate. Its pathway is carbohydrate biosynthesis; gluconeogenesis. It participates in carbohydrate degradation; glycolysis; D-glyceraldehyde 3-phosphate from glycerone phosphate: step 1/1. Its function is as follows. Involved in the gluconeogenesis. Catalyzes stereospecifically the conversion of dihydroxyacetone phosphate (DHAP) to D-glyceraldehyde-3-phosphate (G3P). This Helicobacter pylori (strain ATCC 700392 / 26695) (Campylobacter pylori) protein is Triosephosphate isomerase.